A 245-amino-acid polypeptide reads, in one-letter code: 2-C-methyl-D-erythritol 4-phosphate cytidylyltransferase (245 aa).

It belongs to the IspD/TarI cytidylyltransferase family. IspD subfamily.

The catalysed reaction is 2-C-methyl-D-erythritol 4-phosphate + CTP + H(+) = 4-CDP-2-C-methyl-D-erythritol + diphosphate. The protein operates within isoprenoid biosynthesis; isopentenyl diphosphate biosynthesis via DXP pathway; isopentenyl diphosphate from 1-deoxy-D-xylulose 5-phosphate: step 2/6. Functionally, catalyzes the formation of 4-diphosphocytidyl-2-C-methyl-D-erythritol from CTP and 2-C-methyl-D-erythritol 4-phosphate (MEP). The sequence is that of 2-C-methyl-D-erythritol 4-phosphate cytidylyltransferase from Chloroherpeton thalassium (strain ATCC 35110 / GB-78).